The primary structure comprises 506 residues: 2-isopropylmalate synthase (506 aa).

A Pyruvate carboxyltransferase domain is found at 4-266 (ILFMDTTLRD…EPSMTLKEIK (263 aa)). Asp13, His201, His203, and Asn237 together coordinate Mn(2+). Residues 390–506 (NITQLQVHFV…KLKSFIQLVK (117 aa)) form a regulatory domain region.

The protein belongs to the alpha-IPM synthase/homocitrate synthase family. LeuA type 1 subfamily. Homodimer. It depends on Mn(2+) as a cofactor.

The protein resides in the cytoplasm. It catalyses the reaction 3-methyl-2-oxobutanoate + acetyl-CoA + H2O = (2S)-2-isopropylmalate + CoA + H(+). It functions in the pathway amino-acid biosynthesis; L-leucine biosynthesis; L-leucine from 3-methyl-2-oxobutanoate: step 1/4. In terms of biological role, catalyzes the condensation of the acetyl group of acetyl-CoA with 3-methyl-2-oxobutanoate (2-ketoisovalerate) to form 3-carboxy-3-hydroxy-4-methylpentanoate (2-isopropylmalate). This chain is 2-isopropylmalate synthase, found in Bacillus cereus (strain ATCC 10987 / NRS 248).